Here is a 442-residue protein sequence, read N- to C-terminus: Tubby-related protein 3 (442 aa).

The segment at 23-68 (MRQAKLDYQRLLLEKRQRKKRLEPFMVQPNPEARLRRAKPRASDEQ) is required for association with the IFT complex A (IFT-A). A disordered region spans residues 101 to 177 (PSVSSSVVEE…TSGSATAAQP (77 aa)). Polar residues predominate over residues 145-162 (GISQSACLERPNSASSQN). The span at 163–175 (STDTGTSGSATAA) shows a compositional bias: low complexity.

Belongs to the TUB family. Associates with the IFT complex A (IFT-A). Interacts with SIRT1. Expressed at high levels in testis, ovaries, thyroid, and spinal cord.

It localises to the nucleus. Its subcellular location is the cell membrane. The protein localises to the cell projection. The protein resides in the cilium. It is found in the cytoplasm. It localises to the secreted. Functionally, negative regulator of the Shh signaling transduction pathway: recruited to primary cilia via association with the IFT complex A (IFT-A) and is required for recruitment of G protein-coupled receptor GPR161 to cilia, a promoter of PKA-dependent basal repression machinery in Shh signaling. Binds to phosphorylated inositide (phosphoinositide) lipids. Both IFT-A- and phosphoinositide-binding properties are required to regulate ciliary G protein-coupled receptor trafficking. During adipogenesis, regulates ciliary trafficking of FFAR4 in preadipocytes. This Homo sapiens (Human) protein is Tubby-related protein 3.